A 115-amino-acid chain; its full sequence is Promotilin (115 aa).

Residues 1–25 form the signal peptide; sequence MVSRKAVAALLVVHAPAMLASQTEA. Residues 40–74 are disordered; it reads EKERSKGQKKSLSVWQRSGEEGPVDPAEPIEEEGN.

It belongs to the motilin family.

The protein resides in the secreted. In terms of biological role, plays an important role in the regulation of interdigestive gastrointestinal motility and indirectly causes rhythmic contraction of duodenal and colonic smooth muscle. The sequence is that of Promotilin (MLN) from Macaca mulatta (Rhesus macaque).